Reading from the N-terminus, the 79-residue chain is Acyl carrier protein (79 aa).

A Carrier domain is found at 2 to 77; the sequence is SDVLERVRKI…DAVKFIQERL (76 aa). O-(pantetheine 4'-phosphoryl)serine is present on Ser37.

The protein belongs to the acyl carrier protein (ACP) family. In terms of processing, 4'-phosphopantetheine is transferred from CoA to a specific serine of apo-ACP by AcpS. This modification is essential for activity because fatty acids are bound in thioester linkage to the sulfhydryl of the prosthetic group.

It is found in the cytoplasm. The protein operates within lipid metabolism; fatty acid biosynthesis. Carrier of the growing fatty acid chain in fatty acid biosynthesis. This Phenylobacterium zucineum (strain HLK1) protein is Acyl carrier protein.